A 122-amino-acid chain; its full sequence is MPPKPSGKGQKKAGKAKGAPSTNKKRKRKRKESYGIYIYKVMKQVHPDTGISSKAMSIMNSFVNDIFERIAAEASRLAHYNKKSTITSREVQTAVRLLLPGELAKHAVSEGTKAVTKYTTSK.

Residues 1–31 (MPPKPSGKGQKKAGKAKGAPSTNKKRKRKRK) form a disordered region. N,N-dimethylproline is present on Pro2. Residue Gln10 forms an Isoglutamyl lysine isopeptide (Gln-Lys) (interchain with K-5 in histone H4) linkage. An O-linked (GlcNAc) serine glycan is attached at Ser109. Residue Lys117 forms a Glycyl lysine isopeptide (Lys-Gly) (interchain with G-Cter in ubiquitin) linkage.

It belongs to the histone H2B family. The nucleosome is a histone octamer containing two molecules each of H2A, H2B, H3 and H4 assembled in one H3-H4 heterotetramer and two H2A-H2B heterodimers. The octamer wraps approximately 147 bp of DNA. In terms of processing, monoubiquitination of Lys-117 gives a specific tag for epigenetic transcriptional activation and is also prerequisite for histone H3 'Lys-4' and 'Lys-79' methylation. Post-translationally, glcNAcylation at Ser-109 promotes monoubiquitination of Lys-117. It fluctuates in response to extracellular glucose, and associates with transcribed genes.

The protein resides in the nucleus. It is found in the chromosome. Core component of nucleosome. Nucleosomes wrap and compact DNA into chromatin, limiting DNA accessibility to the cellular machineries which require DNA as a template. Histones thereby play a central role in transcription regulation, DNA repair, DNA replication and chromosomal stability. DNA accessibility is regulated via a complex set of post-translational modifications of histones, also called histone code, and nucleosome remodeling. The sequence is that of Histone H2B from Patiria pectinifera (Starfish).